Reading from the N-terminus, the 462-residue chain is S-alkyl-thiohydroximate lyase SUR1 (462 aa).

The protein belongs to the class-I pyridoxal-phosphate-dependent aminotransferase family. Pyridoxal 5'-phosphate is required as a cofactor.

Functionally, C-S lyase involved in glucosinolate biosynthesis. Converts S-(alkylacetohydroximoyl)-L-cysteine to thiohydroximate. Functions in auxin homeostasis. Probably required for glucosinolate activation in response to pathogens. The polypeptide is S-alkyl-thiohydroximate lyase SUR1 (SUR1) (Arabidopsis thaliana (Mouse-ear cress)).